A 226-amino-acid chain; its full sequence is Probable proteasome subunit beta type-1 (226 aa).

Positions 1 to 24 are cleaved as a propeptide — removed in mature form; the sequence is MATTVKDTMNVDINAIKKGEIRMG. The active-site Nucleophile is the Thr-25.

The protein belongs to the peptidase T1B family. In terms of assembly, the 26S proteasome consists of a 20S proteasome core and two 19S regulatory subunits. The 20S proteasome core is composed of 28 subunits that are arranged in four stacked rings, resulting in a barrel-shaped structure. The two end rings are each formed by seven alpha subunits, and the two central rings are each formed by seven beta subunits. The catalytic chamber with the active sites is on the inside of the barrel.

The protein resides in the cytoplasm. The protein localises to the nucleus. It carries out the reaction Cleavage of peptide bonds with very broad specificity.. In terms of biological role, the proteasome is a multicatalytic proteinase complex which is characterized by its ability to cleave peptides with Arg, Phe, Tyr, Leu, and Glu adjacent to the leaving group at neutral or slightly basic pH. The proteasome has an ATP-dependent proteolytic activity. This is Probable proteasome subunit beta type-1 (pre3) from Schizosaccharomyces pombe (strain 972 / ATCC 24843) (Fission yeast).